The sequence spans 122 residues: UPF0102 protein xcc-b100_3645 (122 aa).

It belongs to the UPF0102 family.

The sequence is that of UPF0102 protein xcc-b100_3645 from Xanthomonas campestris pv. campestris (strain B100).